The chain runs to 277 residues: uncharacterized protein (277 aa).

Residues 139 to 167 (TARELSLDCSCPDYAVPCKHLAATFYLLA) form an SWIM-type zinc finger.

This is an uncharacterized protein from Mycobacterium tuberculosis (strain ATCC 25618 / H37Rv).